Reading from the N-terminus, the 271-residue chain is Catechol O-methyltransferase (271 aa).

Residues 1-6 (MPEAPP) are Cytoplasmic-facing. Residues 7–26 (LLLAAVLLGLVLLVVLLLLL) traverse the membrane as a helical; Signal-anchor for type II membrane protein segment. At 27–271 (RHWGWGLCLI…YKGPGSEAGP (245 aa)) the chain is on the extracellular side. Residues Val92, Glu114, Ser122, Glu140, Ile141, 167-170 (GASQ), Ser169, and Asp191 contribute to the S-adenosyl-L-methionine site. Asp191 lines the Mg(2+) pocket. Lys194 is a binding site for substrate. Asp219 and Asn220 together coordinate Mg(2+). Positions 220 and 249 each coordinate substrate. Ser267 is subject to Phosphoserine.

It belongs to the class I-like SAM-binding methyltransferase superfamily. Cation-dependent O-methyltransferase family. Mg(2+) is required as a cofactor. The N-terminus is blocked. Brain, liver, placenta, lymphocytes and erythrocytes.

It is found in the cytoplasm. Its subcellular location is the cell membrane. The catalysed reaction is a catechol + S-adenosyl-L-methionine = a guaiacol + S-adenosyl-L-homocysteine + H(+). It catalyses the reaction 2-hydroxyestrone + S-adenosyl-L-methionine = 2-hydroxy-3-methoxy-estrone + S-adenosyl-L-homocysteine + H(+). It carries out the reaction 4-hydroxyestrone + S-adenosyl-L-methionine = 4-methoxyestrone + S-adenosyl-L-homocysteine + H(+). The enzyme catalyses 2-hydroxyestrone + S-adenosyl-L-methionine = 2-methoxyestrone + S-adenosyl-L-homocysteine + H(+). The catalysed reaction is 4-hydroxy-17beta-estradiol + S-adenosyl-L-methionine = 4-methoxy-17beta-estradiol + S-adenosyl-L-homocysteine + H(+). It catalyses the reaction 2-hydroxy-17beta-estradiol + S-adenosyl-L-methionine = 2-hydroxy-3-methoxy-17beta-estradiol + S-adenosyl-L-homocysteine + H(+). It carries out the reaction 2-hydroxy-17beta-estradiol + S-adenosyl-L-methionine = 2-methoxy-17beta-estradiol + S-adenosyl-L-homocysteine + H(+). Its function is as follows. Catalyzes the O-methylation, and thereby the inactivation, of catecholamine neurotransmitters and catechol hormones. Also shortens the biological half-lives of certain neuroactive drugs, like L-DOPA, alpha-methyl DOPA and isoproterenol. The sequence is that of Catechol O-methyltransferase from Homo sapiens (Human).